A 115-amino-acid polypeptide reads, in one-letter code: MATTILGVGPGVFIIAVIWMVTLMLTVLLCRASGKARFWTVVVFTLALITTLILVFFPRASQTPAPAKEMQIVDTFFIGRYFLISIMSVIFLGCLFFVFVYHILEPVYAKPIGIH.

The next 3 helical transmembrane spans lie at 5–25 (ILGV…TLML), 38–58 (FWTV…VFFP), and 81–101 (YFLI…VFVY).

The protein belongs to the TMEM218 family.

It is found in the membrane. Its subcellular location is the cell projection. The protein resides in the cilium. Functionally, may be involved in ciliary biogenesis or function. The chain is Transmembrane protein 218 (tmem218) from Xenopus tropicalis (Western clawed frog).